A 511-amino-acid chain; its full sequence is MKKADILVLDFGSQYTQLIARRLREQGVYAEILPFNVSLDEIKAKEPKGIILSGGPASVYANDAYFCDKGVFDLNIPVLGICYGMQLMAHHFGANVAPAGHKEYGKATIDIQNDSDLFKNLPKKQTVWMSHSDKVENLPQGFEVLATSENSPFCVFGDEKRKFFALQFHPEVQHSEFGKSILKNFAKYACNCDSVWNMGSFAKTQAQKIKEEVGNDKVLCAVSGGVDSSVVAALLASAIKDQVVVVFVDNGLLRSGEKEQVEYMFKHTLGIDLISIDAREIFLSRLAGVRDPEQKRKIIGNTFIEVFEEEAKKHKDVKYLAQGTLYTDIIESSVVGASKTIKSHHNVGGLPEKMNLKLIEPLKEIFKDEVRALGMELGLSKDVVYRHPFPGPGLAIRIMGEVNEPSLELLRKADVILIEELKSSGWYDKTWQAFCVLLNVQSVGVMGDNRTYDNAVCVRVVNASDGMTATFSHLPYELLENISRRIINEVNGINRVVYDISSKPPATIEWE.

The Glutamine amidotransferase type-1 domain occupies 5–195; it reads DILVLDFGSQ…AKYACNCDSV (191 aa). The active-site Nucleophile is the cysteine 82. Residues histidine 169 and glutamate 171 contribute to the active site. In terms of domain architecture, GMPS ATP-PPase spans 196 to 386; the sequence is WNMGSFAKTQ…LGLSKDVVYR (191 aa). 223 to 229 lines the ATP pocket; the sequence is SGGVDSS.

As to quaternary structure, homodimer.

The catalysed reaction is XMP + L-glutamine + ATP + H2O = GMP + L-glutamate + AMP + diphosphate + 2 H(+). It participates in purine metabolism; GMP biosynthesis; GMP from XMP (L-Gln route): step 1/1. Its function is as follows. Catalyzes the synthesis of GMP from XMP. The chain is GMP synthase [glutamine-hydrolyzing] from Campylobacter lari (strain RM2100 / D67 / ATCC BAA-1060).